The primary structure comprises 142 residues: Mitochondrial import receptor subunit TOM22 homolog (142 aa).

Low complexity predominate over residues 1-11 (MAAAVAAAGAG). A disordered region spans residues 1–42 (MAAAVAAAGAGEPQSPDELLPKGDAEKPEEELEEDDDEELDE). Residue Ala-2 is modified to N-acetylalanine. The Cytoplasmic segment spans residues 2–83 (AAAVAAAGAG…AQKMYRFSRA (82 aa)). Residue Ser-15 is modified to Phosphoserine. Acidic residues predominate over residues 27–42 (KPEEELEEDDDEELDE). Residues 41-50 (DETLSERLWG) form an import sequence; necessary for mitochondrion outer membrane localization and integration in the TOM complex region. The residue at position 43 (Thr-43) is a Phosphothreonine. The residue at position 45 (Ser-45) is a Phosphoserine. Positions 83–103 (AALWIGTTSFMILVLPVVFET) are TMD; necessary for mitochondrion outer membrane localization and integration in the TOM complex. A helical membrane pass occupies residues 84-103 (ALWIGTTSFMILVLPVVFET). At 104–142 (EKLQMEQQQQLQQRQILLGPNTGLSGGMPGALPSLPGKI) the chain is on the mitochondrial intermembrane side. The interval 123–142 (PNTGLSGGMPGALPSLPGKI) is C-tail signal; necessary for mitochondrion outer membrane localization and integration in the TOM complex.

Belongs to the Tom22 family. In terms of assembly, forms part of the preprotein translocase complex of the outer mitochondrial membrane (TOM complex) which consists of at least 7 different proteins (TOMM5, TOMM6, TOMM7, TOMM20, TOMM22, TOMM40 and TOMM70). Interacts with TOMM40. Interacts with PPP2R2B. As to expression, ubiquitous.

It is found in the mitochondrion outer membrane. Functionally, central receptor component of the translocase of the outer membrane of mitochondria (TOM complex) responsible for the recognition and translocation of cytosolically synthesized mitochondrial preproteins. Together with the peripheral receptor TOM20 functions as the transit peptide receptor and facilitates the movement of preproteins into the translocation pore. Required for the translocation across the mitochondrial outer membrane of cytochrome P450 monooxygenases. The sequence is that of Mitochondrial import receptor subunit TOM22 homolog (TOMM22) from Homo sapiens (Human).